Here is a 256-residue protein sequence, read N- to C-terminus: Small ribosomal subunit protein uS2 (256 aa).

Residues 104–149 are a coiled coil; that stretch reads NFKTISQRVHRLEELEALFASPEIEERPKKEQVRLKHELERLQKYL.

It belongs to the universal ribosomal protein uS2 family. As to quaternary structure, part of the 30S ribosomal subunit. Contacts protein S8.

In terms of biological role, spans the head-body hinge region of the 30S subunit. Is loosely associated with the 30S subunit. This Thermus thermophilus (strain ATCC BAA-163 / DSM 7039 / HB27) protein is Small ribosomal subunit protein uS2 (rpsB).